We begin with the raw amino-acid sequence, 343 residues long: Tetraacyldisaccharide 4'-kinase (343 aa).

Residue 47-54 (SVGGTGKT) coordinates ATP.

It belongs to the LpxK family.

It catalyses the reaction a lipid A disaccharide + ATP = a lipid IVA + ADP + H(+). It functions in the pathway glycolipid biosynthesis; lipid IV(A) biosynthesis; lipid IV(A) from (3R)-3-hydroxytetradecanoyl-[acyl-carrier-protein] and UDP-N-acetyl-alpha-D-glucosamine: step 6/6. Functionally, transfers the gamma-phosphate of ATP to the 4'-position of a tetraacyldisaccharide 1-phosphate intermediate (termed DS-1-P) to form tetraacyldisaccharide 1,4'-bis-phosphate (lipid IVA). The sequence is that of Tetraacyldisaccharide 4'-kinase from Flavobacterium psychrophilum (strain ATCC 49511 / DSM 21280 / CIP 103535 / JIP02/86).